Consider the following 213-residue polypeptide: Small ribosomal subunit protein uS7 (213 aa).

Belongs to the universal ribosomal protein uS7 family. Component of the small ribosomal subunit (SSU). Mature N.crassa ribosomes consist of a small (40S) and a large (60S) subunit. The 40S small subunit contains 1 molecule of ribosomal RNA (18S rRNA) and at least 32 different proteins. The large 60S subunit contains 3 rRNA molecules (26S, 5.8S and 5S rRNA) and at least 42 different proteins.

It is found in the cytoplasm. Its function is as follows. Component of the ribosome, a large ribonucleoprotein complex responsible for the synthesis of proteins in the cell. The small ribosomal subunit (SSU) binds messenger RNAs (mRNAs) and translates the encoded message by selecting cognate aminoacyl-transfer RNA (tRNA) molecules. The large subunit (LSU) contains the ribosomal catalytic site termed the peptidyl transferase center (PTC), which catalyzes the formation of peptide bonds, thereby polymerizing the amino acids delivered by tRNAs into a polypeptide chain. The nascent polypeptides leave the ribosome through a tunnel in the LSU and interact with protein factors that function in enzymatic processing, targeting, and the membrane insertion of nascent chains at the exit of the ribosomal tunnel. The sequence is that of Small ribosomal subunit protein uS7 (rps-5) from Neurospora crassa (strain ATCC 24698 / 74-OR23-1A / CBS 708.71 / DSM 1257 / FGSC 987).